Reading from the N-terminus, the 389-residue chain is Cytochrome oxidase assembly protein SHY1 (389 aa).

Residues 1 to 71 (MSLLGARSTY…SRRERSFGKK (71 aa)) lie on the Mitochondrial matrix side of the membrane. A helical transmembrane segment spans residues 72 to 92 (IVLGLMFAMPIISFYLGTWQV). Over 93–341 (RRLKWKTKLI…KPTIDLKNNH (249 aa)) the chain is Mitochondrial intermembrane. The segment at 292-311 (GTQAVDNNTSKPRSRQEMPT) is disordered. The helical transmembrane segment at 342–362 (LQYLVTWYGLSFLSTIFLIVA) threads the bilayer. Residues 363–389 (LRKAKRGGVVSQDQLMKEKLKHSRKYM) lie on the Mitochondrial matrix side of the membrane.

The protein belongs to the SURF1 family. In terms of assembly, interacts with COA1, COX14 and MSS51.

It is found in the mitochondrion inner membrane. In terms of biological role, required for efficient assembly of cytochrome c oxidase in the mitochondrial inner membrane. Involved in a step that couples MSS51-COX14-dependent regulation of COX1 translation to early steps of cytochrome c oxidase assembly. The protein is Cytochrome oxidase assembly protein SHY1 (SHY1) of Saccharomyces cerevisiae (strain ATCC 204508 / S288c) (Baker's yeast).